The following is a 121-amino-acid chain: UPF0091 protein PH1428 (121 aa).

This sequence belongs to the UPF0091 family.

This is UPF0091 protein PH1428 from Pyrococcus horikoshii (strain ATCC 700860 / DSM 12428 / JCM 9974 / NBRC 100139 / OT-3).